Consider the following 84-residue polypeptide: Large ribosomal subunit protein bL27 (84 aa).

A disordered region spans residues 1 to 22; it reads MAHKKAGGSTRNGRDSESKRLG.

This sequence belongs to the bacterial ribosomal protein bL27 family.

The protein is Large ribosomal subunit protein bL27 of Shewanella oneidensis (strain ATCC 700550 / JCM 31522 / CIP 106686 / LMG 19005 / NCIMB 14063 / MR-1).